Consider the following 404-residue polypeptide: tRNA (carboxymethyluridine(34)-5-O)-methyltransferase (404 aa).

A Phosphoserine modification is found at serine 238.

In terms of assembly, interacts with TRM112A and TRM112B.

The catalysed reaction is 5-(carboxymethyl)uridine(34) in tRNA + S-adenosyl-L-methionine = 5-(2-methoxy-2-oxoethyl)uridine(34) in tRNA + S-adenosyl-L-homocysteine. In terms of biological role, catalyzes the methylation of 5-carboxymethyl uridine to 5-methylcarboxymethyl uridine at the wobble position of the anticodon loop in tRNA via its methyltransferase domain. Catalyzes the last step in the formation of 5-methylcarboxymethyl uridine at the wobble position of the anticodon loop in target tRNA. The chain is tRNA (carboxymethyluridine(34)-5-O)-methyltransferase from Arabidopsis thaliana (Mouse-ear cress).